A 43-amino-acid chain; its full sequence is Snaclec lebecetin subunit beta (43 aa).

Residues 1–43 (ALNCASGWSGGYDQHCYKVFDIPPSWAADEKFCKQQTSGGHLV) form the C-type lectin domain. A disulfide bridge connects residues C4 and C16.

As to quaternary structure, heterodimer of subunits alpha and beta; disulfide-linked. Ca(2+) is required as a cofactor. Glycosylated. In terms of tissue distribution, expressed by the venom gland.

The protein localises to the secreted. Its function is as follows. Binds to the platelet GPIb/IX/V receptor system and inhibits ristocetin-induced platelet aggregation in human platelet-rich plasma. Strongly inhibits platelet aggregation induced by ADP, calcium ionophore, thrombin and collagen. Does not inhibit U46619-induced platelet aggregation. The sequence is that of Snaclec lebecetin subunit beta from Macrovipera lebetinus (Levantine viper).